The following is a 196-amino-acid chain: Endoribonuclease YbeY (196 aa).

Zn(2+)-binding residues include His120, His124, and His130.

It belongs to the endoribonuclease YbeY family. Requires Zn(2+) as cofactor.

The protein resides in the cytoplasm. In terms of biological role, single strand-specific metallo-endoribonuclease involved in late-stage 70S ribosome quality control and in maturation of the 3' terminus of the 16S rRNA. This Corynebacterium glutamicum (strain R) protein is Endoribonuclease YbeY.